The primary structure comprises 1468 residues: DNA polymerase alpha catalytic subunit A (1468 aa).

Over residues 1-12 (MSSKSEKLEKLR) the composition is skewed to basic and acidic residues. Disordered stretches follow at residues 1–34 (MSSKSEKLEKLRKLQAARNGTSIDDYEGDESDGD), 71–135 (GVEE…KKSI), and 166–205 (NLNSSPTSEFKSSIKRVNGNDESSHDAGISKKVKIDPDSS). Ser-2 carries the N-acetylserine modification. Ser-31 carries the post-translational modification Phosphoserine. A compositionally biased stretch (basic and acidic residues) spans 71–80 (GVEEDWREVD). Ser-82, Ser-83, Ser-84, Ser-169, and Ser-170 each carry phosphoserine. Residues 166-176 (NLNSSPTSEFK) show a composition bias toward polar residues. Thr-172 is modified (phosphothreonine). The span at 183–205 (NGNDESSHDAGISKKVKIDPDSS) shows a compositional bias: basic and acidic residues. Phosphoserine occurs at positions 240 and 274. The interval 256 to 275 (LANPPSAQSLADEEDDEDSD) is disordered. The segment covering 266 to 275 (ADEEDDEDSD) has biased composition (acidic residues). Thr-309 and Thr-313 each carry phosphothreonine. The segment at 813–837 (PDKEGNRSRAQKQRQNEENADAPVN) is disordered. Residues 1246-1381 (KKYFRREGGN…CTGVMRYKYS (136 aa)) form a DNA-binding region. Residues Cys-1287, Cys-1290, Cys-1314, Cys-1317, Cys-1348, Cys-1353, Cys-1367, and Cys-1372 each contribute to the Zn(2+) site. The segment at 1287–1317 (CPSCDKRFPFGGIVSSNYYRVSYNGLQCKHC) adopts a CysA-type zinc-finger fold. The short motif at 1348 to 1372 (CDDSTCGIVTRQVSVFGKRCLNDGC) is the CysB motif element.

Belongs to the DNA polymerase type-B family. In terms of assembly, DNA polymerase alpha:primase is a four subunit enzyme complex, which is assembled throughout the cell cycle, and consists of the two DNA polymerase subunits A POL1 and B POL12, and the DNA primase large PRI2 and small PRI1 subunits. Subunit B POL12 binds to subunit A POL1. POL1 interacts with CDC13, POB3, SPT16 and MCM10.

It is found in the nucleus. The catalysed reaction is DNA(n) + a 2'-deoxyribonucleoside 5'-triphosphate = DNA(n+1) + diphosphate. In terms of biological role, catalytic component of DNA polymerase alpha, which in complex with DNA primase (DNA polymerase alpha:primase) constitutes a replicative polymerase. POL1 has a role in promoting telomere replication during interaction with CDC13. The protein is DNA polymerase alpha catalytic subunit A (POL1) of Saccharomyces cerevisiae (strain ATCC 204508 / S288c) (Baker's yeast).